The following is a 561-amino-acid chain: uncharacterized protein (561 aa).

2 disordered regions span residues 20 to 42 and 82 to 283; these read IQEQATSDTKPESSPDINLGCSP and QIGS…STPF. The span at 103–131 shows a compositional bias: basic and acidic residues; that stretch reads DKISEDTDQERVVVCESLENKSSSKDKSP. Composition is skewed to basic residues over residues 135–156 and 165–185; these read RSPKRHKSSKKHKSSKKHKSSK and KSSKRHKSHKKKDKSHKKRYR. Basic and acidic residues-rich tracts occupy residues 192–203, 211–247, and 259–272; these read SLSRDRSSSRDR, YSRDRSLSRDRSLSRDRSLSRDRSPPRDRSLSRDRSP, and PLRDRSPTRDRSVS.

Belongs to the mimivirus L41 family.

This is an uncharacterized protein from Acanthamoeba polyphaga (Amoeba).